A 145-amino-acid polypeptide reads, in one-letter code: Major pollen allergen Ole e 1 (145 aa).

Cystine bridges form between Cys-19/Cys-90, Cys-22/Cys-131, and Cys-43/Cys-78. N-linked (GlcNAc...) (complex) asparagine; alternate glycosylation occurs at Asn-111. Asn-111 carries an N-linked (GlcNAc...) (high mannose) asparagine; alternate glycan.

This sequence belongs to the Ole e I family. N-glycosylated; contains high mannose (Man(7)-GlcNAc) and partially fucosylated complex glycans (GlcNAc-Man(3)-Xyl-GlcNAc). Complex glycans may contribute to the antigenicity. Exists both in a glycosylated and in a non-glycosylated form. Ole e 1 and Ole e 1.0103 are the only non-glycosylated isoallergens. In terms of processing, a second potential glycosylation site exists at position 50 in cv. Bella de Espana and cv. Hojiblanca. In terms of tissue distribution, expressed in tapetum and pollen grains. Not detected in petals, roots or leaves.

The protein resides in the endoplasmic reticulum. The protein localises to the secreted. May be involved in recognition between pollen-stigma and pollen tube-style cells. The sequence is that of Major pollen allergen Ole e 1 from Olea europaea (Common olive).